Here is a 219-residue protein sequence, read N- to C-terminus: Lipid transferase CIDEB (219 aa).

Threonine 18 is subject to Phosphothreonine. Residues 34–110 (PQRPFRVCDH…VLEQGQSWSP (77 aa)) enclose the CIDE-N domain.

Belongs to the CIDE family. As to quaternary structure, interacts with DFFA. Interacts with DFFB; inhibited by DFFB. Interacts with APOB. Interacts with PREB/SEC12; facilitating loading of SCAP-SREBP into COPII vesicles. In terms of tissue distribution, highly enriched in the liver.

The protein resides in the lipid droplet. It localises to the endoplasmic reticulum membrane. It is found in the golgi apparatus. The protein localises to the cytoplasmic vesicle. Its subcellular location is the COPI-coated vesicle. Functionally, lipid transferase specifically expressed in hepatocytes, which promotes unilocular lipid droplet formation by mediating lipid droplet fusion. Lipid droplet fusion promotes their enlargement, restricting lipolysis and favoring lipid storage. Localizes on the lipid droplet surface, at focal contact sites between lipid droplets, and mediates atypical lipid droplet fusion by promoting directional net neutral lipid transfer from the smaller to larger lipid droplets. The transfer direction may be driven by the internal pressure difference between the contacting lipid droplet pair. Promotes lipid exchange and lipid droplet fusion in both small and large lipid droplet-containing hepatocytes. In addition to its role in lipid droplet fusion, also involved in cytoplasmic vesicle biogenesis and transport. Required for very-low-density lipoprotein (VLDL) lipidation and maturation. Probably involved in the biogenesis of VLDL transport vesicles by forming a COPII vesicle coat and facilitating the formation of endoplasmic reticulum-derived large vesicles. Also involved in sterol-regulated export of the SCAP-SREBP complex, composed of SCAP, SREBF1/SREBP1 and SREBF2/SREBP2, by promoting loading of SCAP-SREBP into COPII vesicles. May also activate apoptosis. This chain is Lipid transferase CIDEB, found in Mus musculus (Mouse).